Reading from the N-terminus, the 608-residue chain is MDYKALGLKTGLEIHIQLNTRRKLFCHCPPVLRDDEPHFRVERRLHISVSELGAVDPAVVWEVRKRRKYIYEGYRDTTCLVELDEEPPHMPDEEALTTAVAVAKMFNAKLFDEIYVMRKTVVDGSNVSGFQRTMLVAYGGRAKILGYDIGVETIALEEDAARKMGEEGKAVVYRLDRLGIPLIEIATEPMTYAPQQVEEVAWIIGYSVKITGRAKRGVGTVRQDVNVSIAGGAKTEIKGVPDLSLIPKVIEYEATRQLSLLKIAEELKRRGVEKVELSLADVTQAFANTKSKLVRRVLDAGGKVVAVKAPGFNKLLGAEVQPGRRFGTELADYVRAWTELGGLLHSDELPGYGITADEVRDVEARVGVNSFILLMGVDEGELEEAARVVVERLNAAPRGVPEETRAANPDGTTRFLRPRPGAARMYPETDLPPVRITFEILKKAEEVAKVTLEGKLKELTSRGLSRDLALQLVKSPHLEKFEDYLQRFKEVPPQQIAAVLLNISKALAREGVEITDEKVESVLDALNRKVITKEAVEEVLRNMKPGESAEEAAKRLGLLRMSYDEVKKIVAEVAAQVGKEKAVGEVMRRYRGKVDVEDVRRALAEIYL.

The tract at residues 401–428 is disordered; it reads PEETRAANPDGTTRFLRPRPGAARMYPE.

It belongs to the GatB/GatE family. GatE subfamily. In terms of assembly, heterodimer of GatD and GatE.

It carries out the reaction L-glutamyl-tRNA(Gln) + L-glutamine + ATP + H2O = L-glutaminyl-tRNA(Gln) + L-glutamate + ADP + phosphate + H(+). Its function is as follows. Allows the formation of correctly charged Gln-tRNA(Gln) through the transamidation of misacylated Glu-tRNA(Gln) in organisms which lack glutaminyl-tRNA synthetase. The reaction takes place in the presence of glutamine and ATP through an activated gamma-phospho-Glu-tRNA(Gln). The GatDE system is specific for glutamate and does not act on aspartate. This is Glutamyl-tRNA(Gln) amidotransferase subunit E from Pyrobaculum arsenaticum (strain DSM 13514 / JCM 11321 / PZ6).